Consider the following 119-residue polypeptide: Autophagy-related protein 8C-like (119 aa).

The Phosphatidylethanolamine amidated glycine moiety is linked to residue glycine 117. A propeptide spans 118 to 119 (SF) (removed in mature form).

This sequence belongs to the ATG8 family. In terms of assembly, interacts with ATG4. Interacts with the Phytophtora infestans effector PexRD54. Interacts with JOKA2. The C-terminal 2 residues are removed by ATG4 to expose Gly-117 at the C-terminus. The C-terminal Gly is then amidated with phosphatidylethanolamine by an activating system similar to that for ubiquitin. The phosphatidylethanolamine amidated glycine is required for autophagosome formation.

The protein localises to the cytoplasmic vesicle. It localises to the autophagosome membrane. The protein resides in the vacuole membrane. It is found in the cytoplasm. Its subcellular location is the cytoskeleton. Ubiquitin-like modifier involved in autophagosomes formation. May mediate the delivery of the autophagosomes to the vacuole via the microtubule cytoskeleton. ATG8CL-mediated selective autophagy contributes to defense against the fungal pathogen Phytophtora infestans. The polypeptide is Autophagy-related protein 8C-like (Solanum tuberosum (Potato)).